A 242-amino-acid polypeptide reads, in one-letter code: Probable septum site-determining protein MinC (242 aa).

This sequence belongs to the MinC family. As to quaternary structure, interacts with MinD and FtsZ.

In terms of biological role, cell division inhibitor that blocks the formation of polar Z ring septums. Rapidly oscillates between the poles of the cell to destabilize FtsZ filaments that have formed before they mature into polar Z rings. Prevents FtsZ polymerization. In Thioalkalivibrio sulfidiphilus (strain HL-EbGR7), this protein is Probable septum site-determining protein MinC.